A 228-amino-acid polypeptide reads, in one-letter code: DNA mismatch repair protein MutH (228 aa).

The protein belongs to the MutH family.

It is found in the cytoplasm. Sequence-specific endonuclease that cleaves unmethylated GATC sequences. It is involved in DNA mismatch repair. In Photorhabdus laumondii subsp. laumondii (strain DSM 15139 / CIP 105565 / TT01) (Photorhabdus luminescens subsp. laumondii), this protein is DNA mismatch repair protein MutH.